The following is a 695-amino-acid chain: Elongation factor G (695 aa).

The 280-residue stretch at K10–L289 folds into the tr-type G domain. GTP-binding positions include A19–T26, D83–H87, and N137–D140.

This sequence belongs to the TRAFAC class translation factor GTPase superfamily. Classic translation factor GTPase family. EF-G/EF-2 subfamily.

It localises to the cytoplasm. Catalyzes the GTP-dependent ribosomal translocation step during translation elongation. During this step, the ribosome changes from the pre-translocational (PRE) to the post-translocational (POST) state as the newly formed A-site-bound peptidyl-tRNA and P-site-bound deacylated tRNA move to the P and E sites, respectively. Catalyzes the coordinated movement of the two tRNA molecules, the mRNA and conformational changes in the ribosome. In Protochlamydia amoebophila (strain UWE25), this protein is Elongation factor G.